Here is a 348-residue protein sequence, read N- to C-terminus: Phosphate acyltransferase (348 aa).

It belongs to the PlsX family. As to quaternary structure, homodimer. Probably interacts with PlsY.

It is found in the cytoplasm. The enzyme catalyses a fatty acyl-[ACP] + phosphate = an acyl phosphate + holo-[ACP]. It participates in lipid metabolism; phospholipid metabolism. In terms of biological role, catalyzes the reversible formation of acyl-phosphate (acyl-PO(4)) from acyl-[acyl-carrier-protein] (acyl-ACP). This enzyme utilizes acyl-ACP as fatty acyl donor, but not acyl-CoA. The polypeptide is Phosphate acyltransferase (Rhizobium etli (strain ATCC 51251 / DSM 11541 / JCM 21823 / NBRC 15573 / CFN 42)).